Reading from the N-terminus, the 97-residue chain is Co-chaperonin GroES (97 aa).

This sequence belongs to the GroES chaperonin family. Heptamer of 7 subunits arranged in a ring. Interacts with the chaperonin GroEL.

The protein resides in the cytoplasm. Its function is as follows. Together with the chaperonin GroEL, plays an essential role in assisting protein folding. The GroEL-GroES system forms a nano-cage that allows encapsulation of the non-native substrate proteins and provides a physical environment optimized to promote and accelerate protein folding. GroES binds to the apical surface of the GroEL ring, thereby capping the opening of the GroEL channel. This chain is Co-chaperonin GroES, found in Buchnera aphidicola subsp. Pemphigus spyrothecae.